Consider the following 691-residue polypeptide: Protein phosphatase Slingshot homolog (691 aa).

One can recognise a DEK-C domain in the interval 236–291 (EETERIIKLKLRDILRESDLENITSKEVRSALEQHTLCALQDYKEFIDNEMIIILA). The region spanning 295-436 (RPSEIFPYLY…LQTYQGILGA (142 aa)) is the Tyrosine-protein phosphatase domain. Cys380 functions as the Phosphocysteine intermediate in the catalytic mechanism. Residues 532–580 (NEHVLSKEQIIQEEKKVMELEKGPEWVVKNNVLEEMKETEERELPNFEL) adopt a coiled-coil conformation. Residues 585 to 620 (NQSRERDQETIKESSVITQGSSSLDEVFESSTPTRS) are disordered. The span at 587–596 (SRERDQETIK) shows a compositional bias: basic and acidic residues. The span at 597–619 (ESSVITQGSSSLDEVFESSTPTR) shows a compositional bias: polar residues.

Belongs to the protein-tyrosine phosphatase family. In terms of assembly, interacts with actin and this stimulates phosphatase activity.

It localises to the cytoplasm. Its subcellular location is the cytoskeleton. It is found in the cleavage furrow. The protein localises to the midbody. The enzyme catalyses O-phospho-L-tyrosyl-[protein] + H2O = L-tyrosyl-[protein] + phosphate. The catalysed reaction is O-phospho-L-seryl-[protein] + H2O = L-seryl-[protein] + phosphate. It catalyses the reaction O-phospho-L-threonyl-[protein] + H2O = L-threonyl-[protein] + phosphate. Its function is as follows. Protein phosphatase which regulates actin filament dynamics. Dephosphorylates and activates the actin binding/depolymerizing factor cofilin, which subsequently binds to actin filaments and stimulates their disassembly. Required for completion of the gastrulation movement and for cytokinesis. This is Protein phosphatase Slingshot homolog (ssh) from Xenopus laevis (African clawed frog).